The primary structure comprises 977 residues: Leucine--tRNA ligase (977 aa).

Positions 11-21 (PYVNGYLHLGH) match the 'HIGH' region motif. An insert region spans residues 220-318 (VFYVYELYSL…EYYNTKVETQ (99 aa)). Residues 699 to 703 (KMSKS) carry the 'KMSKS' region motif. An ATP-binding site is contributed by Lys702.

This sequence belongs to the class-I aminoacyl-tRNA synthetase family.

It is found in the cytoplasm. The catalysed reaction is tRNA(Leu) + L-leucine + ATP = L-leucyl-tRNA(Leu) + AMP + diphosphate. The sequence is that of Leucine--tRNA ligase (leuS) from Nanoarchaeum equitans (strain Kin4-M).